The sequence spans 257 residues: METWFLYFITKSISYALFMVLIVTFLESLALVGLFLPGIVLMSILGTLIGNGTLSFYPAWIVGIIGCMCGDWISYYCGFKFKKCITNLHLLKNNNVVLDKITNTLTNYPITTILLGRFIGPTRPLVPMVCGMLNISLKTFIIPNILGCILWPPIYFLPGIFTGIAISNTTNYSENTYFKIQFLAAILLIWLGIFLLWKLWKRYTDTGKKKIYISNVNLCLLLTISLSAGITIMIYIQSNSTLIFFRKILWKILISSQ.

Transmembrane regions (helical) follow at residues 5–25, 29–49, 53–73, 146–166, 180–200, and 216–236; these read FLYF…IVTF, LALV…GTLI, TLSF…GDWI, LGCI…GIAI, IQFL…WKLW, and VNLC…MIYI.

The protein belongs to the DedA family.

Its subcellular location is the cell membrane. This is an uncharacterized protein from Buchnera aphidicola subsp. Baizongia pistaciae (strain Bp).